Here is a 494-residue protein sequence, read N- to C-terminus: Alpha-amylase-related protein (494 aa).

Residues 1 to 20 (MIKFALALTLCLAGASLSLA) form the signal peptide. Q21 carries the post-translational modification Pyrrolidone carboxylic acid. Cysteines 48 and 104 form a disulfide. Ca(2+) is bound by residues N118, Q169, and D178. A disulfide bridge connects residues C157 and C171. Residue R206 participates in chloride binding. The active-site Nucleophile is D208. H212 provides a ligand contact to Ca(2+). The active-site Proton donor is E245. 2 residues coordinate chloride: N308 and R343. 3 disulfide bridges follow: C376/C382, C418/C441, and C448/C460.

This sequence belongs to the glycosyl hydrolase 13 family. Monomer. Requires Ca(2+) as cofactor. It depends on chloride as a cofactor.

Its subcellular location is the secreted. It carries out the reaction Endohydrolysis of (1-&gt;4)-alpha-D-glucosidic linkages in polysaccharides containing three or more (1-&gt;4)-alpha-linked D-glucose units.. The chain is Alpha-amylase-related protein (Amyrel) from Drosophila lini (Fruit fly).